We begin with the raw amino-acid sequence, 248 residues long: Caffeoyl-CoA O-methyltransferase 3 (248 aa).

Lys22 lines the substrate pocket. S-adenosyl-L-methionine-binding positions include Thr64, Glu86, 88-89 (GV), Ser94, Asp112, and Ala141. Asp164 contributes to the substrate binding site. An a divalent metal cation-binding site is contributed by Asp164. Asp166 lines the S-adenosyl-L-methionine pocket. Asp190 and Asn191 together coordinate a divalent metal cation. Asn195 is a binding site for substrate.

It belongs to the class I-like SAM-binding methyltransferase superfamily. Cation-dependent O-methyltransferase family. CCoAMT subfamily. Requires a divalent metal cation as cofactor. Mostly expressed in petal limbs and tubes, and, at low levels, in stems, roots and leaves.

The protein localises to the cytoplasm. Its subcellular location is the cytosol. The catalysed reaction is (E)-caffeoyl-CoA + S-adenosyl-L-methionine = (E)-feruloyl-CoA + S-adenosyl-L-homocysteine + H(+). The enzyme catalyses (E)-5-hydroxyferuloyl-CoA + S-adenosyl-L-methionine = (E)-sinapoyl-CoA + S-adenosyl-L-homocysteine + H(+). It functions in the pathway aromatic compound metabolism; phenylpropanoid biosynthesis. Functionally, involved in the production of floral volatile phenylpropanoids in flowers of fragrant cultivars (e.g. cv. Mitchell and cv. V26) from cinnamic acid, a common precursor with the anthocyanin biosynthesis pathway involved in flower pigmentation. Methylates caffeoyl-CoA to feruloyl-CoA, also able to methylate 5-hydroxyferuloyl-CoA. In Petunia hybrida (Petunia), this protein is Caffeoyl-CoA O-methyltransferase 3.